The chain runs to 298 residues: Nucleotide-binding protein GK3066 (298 aa).

17–24 serves as a coordination point for ATP; the sequence is GMSGAGKT. Position 68–71 (68–71) interacts with GTP; sequence DLRS.

It belongs to the RapZ-like family.

Functionally, displays ATPase and GTPase activities. This is Nucleotide-binding protein GK3066 from Geobacillus kaustophilus (strain HTA426).